The primary structure comprises 99 residues: UPF0235 protein Avin_03050 (99 aa).

Residues 66 to 99 (VSLESGESNRQKRVRIRRPRQLPALPGLAPRPDA) form a disordered region. Residues 76-85 (QKRVRIRRPR) show a composition bias toward basic residues.

The protein belongs to the UPF0235 family.

This Azotobacter vinelandii (strain DJ / ATCC BAA-1303) protein is UPF0235 protein Avin_03050.